A 31-amino-acid polypeptide reads, in one-letter code: Cytochrome b6-f complex subunit 6 (31 aa).

A helical transmembrane segment spans residues 4 to 24 (LLSYFGLLLAALISTLVLFIG).

This sequence belongs to the PetL family. The 4 large subunits of the cytochrome b6-f complex are cytochrome b6, subunit IV (17 kDa polypeptide, PetD), cytochrome f and the Rieske protein, while the 4 small subunits are PetG, PetL, PetM and PetN. The complex functions as a dimer.

Its subcellular location is the plastid. It is found in the chloroplast thylakoid membrane. Component of the cytochrome b6-f complex, which mediates electron transfer between photosystem II (PSII) and photosystem I (PSI), cyclic electron flow around PSI, and state transitions. PetL is important for photoautotrophic growth as well as for electron transfer efficiency and stability of the cytochrome b6-f complex. In Psilotum nudum (Whisk fern), this protein is Cytochrome b6-f complex subunit 6.